Reading from the N-terminus, the 478-residue chain is Transposase for insertion sequence element IS231B (478 aa).

This sequence belongs to the transposase 11 family.

Its function is as follows. Involved in the transposition of the insertion sequence. The polypeptide is Transposase for insertion sequence element IS231B (Bacillus thuringiensis subsp. berliner).